The chain runs to 285 residues: ATP phosphoribosyltransferase (285 aa).

Belongs to the ATP phosphoribosyltransferase family. Long subfamily. Mg(2+) is required as a cofactor.

The protein resides in the cytoplasm. The enzyme catalyses 1-(5-phospho-beta-D-ribosyl)-ATP + diphosphate = 5-phospho-alpha-D-ribose 1-diphosphate + ATP. The protein operates within amino-acid biosynthesis; L-histidine biosynthesis; L-histidine from 5-phospho-alpha-D-ribose 1-diphosphate: step 1/9. Feedback inhibited by histidine. Functionally, catalyzes the condensation of ATP and 5-phosphoribose 1-diphosphate to form N'-(5'-phosphoribosyl)-ATP (PR-ATP). Has a crucial role in the pathway because the rate of histidine biosynthesis seems to be controlled primarily by regulation of HisG enzymatic activity. This Methanocella arvoryzae (strain DSM 22066 / NBRC 105507 / MRE50) protein is ATP phosphoribosyltransferase.